A 109-amino-acid chain; its full sequence is UPF0449 protein C19orf25 homolog (109 aa).

A Phosphotyrosine modification is found at Y63.

The protein belongs to the UPF0449 family.

This Rattus norvegicus (Rat) protein is UPF0449 protein C19orf25 homolog.